The sequence spans 91 residues: MQRNLVVLLLLGMVALSSCGLREKHFQKLVKYAVPESTLRTILQTAVHKLGKTQFGCPAYQGYCDDHCQDIKKEEGFCHGMKCKCGIPMGF.

An N-terminal signal peptide occupies residues 1 to 20; it reads MQRNLVVLLLLGMVALSSCG. A propeptide spanning residues 21 to 27 is cleaved from the precursor; that stretch reads LREKHFQ. In terms of domain architecture, BetaSPN-type CS-alpha/beta spans 54–91; that stretch reads QFGCPAYQGYCDDHCQDIKKEEGFCHGMKCKCGIPMGF. 3 disulfides stabilise this stretch: Cys-57–Cys-78, Cys-64–Cys-83, and Cys-68–Cys-85.

Belongs to the long chain scorpion toxin family. Class 1 subfamily. As to expression, expressed by the venom gland.

The protein resides in the secreted. Functionally, inhibits voltage-gated potassium channel. In Buthus israelis (Israeli scorpion), this protein is Potassium channel toxin BuTXK-beta.